A 706-amino-acid chain; its full sequence is Fatty acid oxidation complex subunit alpha (706 aa).

An enoyl-CoA hydratase region spans residues 1 to 188; the sequence is MEKTFNLTRR…KMGLVNDVVP (188 aa). Residues 308–706 are 3-hydroxyacyl-CoA dehydrogenase; it reads RKVKKAVILG…TMARENVSFF (399 aa).

This sequence in the N-terminal section; belongs to the enoyl-CoA hydratase/isomerase family. The protein in the central section; belongs to the 3-hydroxyacyl-CoA dehydrogenase family. Heterotetramer of two alpha chains (FadJ) and two beta chains (FadI).

It is found in the cytoplasm. The catalysed reaction is a (3S)-3-hydroxyacyl-CoA = a (2E)-enoyl-CoA + H2O. It carries out the reaction a 4-saturated-(3S)-3-hydroxyacyl-CoA = a (3E)-enoyl-CoA + H2O. The enzyme catalyses a (3S)-3-hydroxyacyl-CoA + NAD(+) = a 3-oxoacyl-CoA + NADH + H(+). It catalyses the reaction (3S)-3-hydroxybutanoyl-CoA = (3R)-3-hydroxybutanoyl-CoA. Its pathway is lipid metabolism; fatty acid beta-oxidation. Its function is as follows. Catalyzes the formation of a hydroxyacyl-CoA by addition of water on enoyl-CoA. Also exhibits 3-hydroxyacyl-CoA epimerase and 3-hydroxyacyl-CoA dehydrogenase activities. This is Fatty acid oxidation complex subunit alpha from Shewanella sp. (strain W3-18-1).